The sequence spans 572 residues: MRTSQYLLSTLKETPADAEVISHQLMLRAGMIRKLASGLYTWLPTGLRVLKKVENIVREEMNNAGAIEVSMPVVQPADLWQESGRWEQYGPELLRFVDRGERPFVLGPTHEEVITDLVRNELSSYKQLPLNFFQIQTKFRDEVRPRFGVMRSREFLMKDAYSFHTSQESLQETYDAMYAAYSRIFSRMGLDFRAVQADTGSIGGNASHEFQVLAQSGEDDIVFSDVSDYAANIELAEAIAPQTPRAAATQEMTLVDTPNAKTIAELVEQFNLPIEKTVKTLLVKAVKDSKSPLVALLVRGDHELNEVKAEKLPHVASPLTFATEEEIRAVINAGPGSLGPVNMPIPVIIDRTVAAMSDFAAGANIDGKHYFGINWDRDVATPVVADIRNVVAGDPSPDGQGTLLIKRGIEVGHIFQLGTKYSEALKASVQGEDGRNQILTMGCYGIGVTRVVAAAIEQNFDERGIVWPDAIAPFQVAILPMNMHKSFRVQELAEKLYSELRAQGIEVLMDDRKERPGVMFADMELIGIPHTIVIGDRNLDNDDIEYKYRRSGEKSLIKTGDIVDYLVKAIKG.

It belongs to the class-II aminoacyl-tRNA synthetase family. ProS type 1 subfamily. Homodimer.

It localises to the cytoplasm. It carries out the reaction tRNA(Pro) + L-proline + ATP = L-prolyl-tRNA(Pro) + AMP + diphosphate. Functionally, catalyzes the attachment of proline to tRNA(Pro) in a two-step reaction: proline is first activated by ATP to form Pro-AMP and then transferred to the acceptor end of tRNA(Pro). As ProRS can inadvertently accommodate and process non-cognate amino acids such as alanine and cysteine, to avoid such errors it has two additional distinct editing activities against alanine. One activity is designated as 'pretransfer' editing and involves the tRNA(Pro)-independent hydrolysis of activated Ala-AMP. The other activity is designated 'posttransfer' editing and involves deacylation of mischarged Ala-tRNA(Pro). The misacylated Cys-tRNA(Pro) is not edited by ProRS. The chain is Proline--tRNA ligase from Salmonella dublin (strain CT_02021853).